The chain runs to 91 residues: Large ribosomal subunit protein bL31B (91 aa).

It belongs to the bacterial ribosomal protein bL31 family. Type B subfamily. As to quaternary structure, part of the 50S ribosomal subunit.

The protein is Large ribosomal subunit protein bL31B of Mycolicibacterium vanbaalenii (strain DSM 7251 / JCM 13017 / BCRC 16820 / KCTC 9966 / NRRL B-24157 / PYR-1) (Mycobacterium vanbaalenii).